A 37-amino-acid chain; its full sequence is Large ribosomal subunit protein bL36c (37 aa).

The protein belongs to the bacterial ribosomal protein bL36 family.

Its subcellular location is the plastid. The protein localises to the chloroplast. The chain is Large ribosomal subunit protein bL36c from Nicotiana tomentosiformis (Tobacco).